Here is a 115-residue protein sequence, read N- to C-terminus: Toxin-like structure LSTX-D1 (115 aa).

A signal peptide spans 1-22 (MKVLVLFSVLFLTLFSYSSTEA). Positions 23–44 (IDEFDSDAEEDMLSLMANEQVR) are excised as a propeptide. 4 disulfide bridges follow: Cys48–Cys63, Cys55–Cys72, Cys62–Cys87, and Cys74–Cys85.

It belongs to the neurotoxin 19 (CSTX) family. 01 subfamily. In terms of tissue distribution, expressed by the venom gland.

It is found in the secreted. The sequence is that of Toxin-like structure LSTX-D1 from Lycosa singoriensis (Wolf spider).